The primary structure comprises 397 residues: Elongation factor Tu (397 aa).

Positions 10 to 206 constitute a tr-type G domain; sequence KPHVNIGTIG…AVDESIPEPQ (197 aa). Residues 19-26 form a G1 region; the sequence is GHIDHGKT. 19–26 contributes to the GTP binding site; that stretch reads GHIDHGKT. Thr-26 contacts Mg(2+). The segment at 62–66 is G2; the sequence is GITIS. Positions 83 to 86 are G3; that stretch reads DCPG. Residues 83-87 and 138-141 contribute to the GTP site; these read DCPGH and NKAD. The G4 stretch occupies residues 138–141; that stretch reads NKAD. The interval 176 to 178 is G5; sequence SAL.

The protein belongs to the TRAFAC class translation factor GTPase superfamily. Classic translation factor GTPase family. EF-Tu/EF-1A subfamily. Monomer.

Its subcellular location is the cytoplasm. It catalyses the reaction GTP + H2O = GDP + phosphate + H(+). GTP hydrolase that promotes the GTP-dependent binding of aminoacyl-tRNA to the A-site of ribosomes during protein biosynthesis. The sequence is that of Elongation factor Tu from Frankia casuarinae (strain DSM 45818 / CECT 9043 / HFP020203 / CcI3).